A 644-amino-acid chain; its full sequence is MQTVRMTTAQALVKFLNQQYVEFDGKQQKFIKGIFTIFGHGNVVGLGQALEEDAGELEVYQGRNEQGMANAAMAFAKQKHRKQIMACTSSVGPGSANMITSAATASANNIPVLLLPGDVFATRQSDPVLQQIEQTHDLSISTNDAFRAVSKYWDRINRPEQLMTAMIQAMRVLTNPADTGAVTICLPQDVQGEAWDFPDYFFQKRVHRIERRLPTKASLADAVEMIKRKKKPVMICGGGVRYAEAAEELKQFAETFHIPFGETQAGKSAIESSHPYNLGGIGVTGNIAANTIAKEADLVIGIGTRFTDFTTASKQLFQNEEVEFLNINISEFHANKLDALKVIADAKEALLVLIDELQVMDYRSSYTVEIADAKEAWETELSRLHNIRFTGQDFTPEVEGHFDGNLNEYVDALGSQLTQTAVIGQINTLLDEDAIIVGAAGSLPGDLQRMWASRKPNTYHMEYGYSCMGYEVAGALGAKLAEPSKEVYAMVGDGSYQMLHSELVTSLQENKKINVLLFDNSGFGCINNLQMGNGMGSFGTEFRYRNQETRKLDGTIMKIDFAASAAGYGVKTYHVTSLEQLQEALIDAKKQTVSTLIDIKVLPKTMTNGYESWWHVGIAEVSKSQRVQAAYESKVSNLQQARSY.

Glu65 contributes to the thiamine diphosphate binding site. The thiamine pyrophosphate binding stretch occupies residues Ser442 to Gly522. Mg(2+) contacts are provided by Asp493 and Asn520.

Belongs to the TPP enzyme family. It depends on Mg(2+) as a cofactor. The cofactor is thiamine diphosphate.

The enzyme catalyses 3D-3,5/4-trihydroxycyclohexane-1,2-dione + H2O = 5-deoxy-D-glucuronate + H(+). Its pathway is polyol metabolism; myo-inositol degradation into acetyl-CoA; acetyl-CoA from myo-inositol: step 3/7. Involved in the cleavage of the C1-C2 bond of 3D-(3,5/4)-trihydroxycyclohexane-1,2-dione (THcHDO) to yield 5-deoxy-glucuronate (5DG). The chain is 3D-(3,5/4)-trihydroxycyclohexane-1,2-dione hydrolase from Bacillus thuringiensis (strain Al Hakam).